The following is a 121-amino-acid chain: MARIAGVNIPNHQHTVIGLTAIFGIGTTRANKICQTTGVAIDKKVKDLTDADLEKLRDEVGKFITEGDLRREVTMSIKRLMDLGCYRGVRHRKGLPVRGQRTKTNARTRKGPRKSGVQLKK.

Positions 92-121 (RKGLPVRGQRTKTNARTRKGPRKSGVQLKK) are disordered.

The protein belongs to the universal ribosomal protein uS13 family. As to quaternary structure, part of the 30S ribosomal subunit. Forms a loose heterodimer with protein S19. Forms two bridges to the 50S subunit in the 70S ribosome.

Its function is as follows. Located at the top of the head of the 30S subunit, it contacts several helices of the 16S rRNA. In the 70S ribosome it contacts the 23S rRNA (bridge B1a) and protein L5 of the 50S subunit (bridge B1b), connecting the 2 subunits; these bridges are implicated in subunit movement. Contacts the tRNAs in the A and P-sites. The protein is Small ribosomal subunit protein uS13 of Polynucleobacter asymbioticus (strain DSM 18221 / CIP 109841 / QLW-P1DMWA-1) (Polynucleobacter necessarius subsp. asymbioticus).